The following is a 968-amino-acid chain: RNA polymerase-associated protein RapA (968 aa).

The 171-residue stretch at 164–334 (DVGRRHAPRV…FARLRLLDPN (171 aa)) folds into the Helicase ATP-binding domain. 177-184 (DEVGLGKT) provides a ligand contact to ATP. The short motif at 280–283 (DEAH) is the DEAH box element. The Helicase C-terminal domain maps to 490–662 (RVEWLMGYLT…YLASPDETEG (173 aa)).

Belongs to the SNF2/RAD54 helicase family. RapA subfamily. As to quaternary structure, interacts with the RNAP. Has a higher affinity for the core RNAP than for the holoenzyme. Its ATPase activity is stimulated by binding to RNAP.

In terms of biological role, transcription regulator that activates transcription by stimulating RNA polymerase (RNAP) recycling in case of stress conditions such as supercoiled DNA or high salt concentrations. Probably acts by releasing the RNAP, when it is trapped or immobilized on tightly supercoiled DNA. Does not activate transcription on linear DNA. Probably not involved in DNA repair. This Escherichia coli O127:H6 (strain E2348/69 / EPEC) protein is RNA polymerase-associated protein RapA.